Here is a 138-residue protein sequence, read N- to C-terminus: uncharacterized protein (138 aa).

The disordered stretch occupies residues 74–96 (RRRSPSLPARRPPTPREDALEDY). Residues 87 to 96 (TPREDALEDY) show a composition bias toward basic and acidic residues.

This is an uncharacterized protein from Orgyia pseudotsugata (Douglas-fir tussock moth).